Consider the following 664-residue polypeptide: MERPEEGKQSPPPQPWGRLLRLGAEEGEPHVLLRKREWTIGRRRGCDLSFPSNKLVSGDHCRIVVDEKSGQVTLEDTSTSGTVINKLKVVKKQTCPLQTGDVIYLVYRKNEPEHNVAYLYESLSEKQGMTQESFEANKENVFHGTKDTSGAGAGRGADPRVPPSSPATQVCFEEPQPSTSTSDLFPTASASSTEPSPAGRERSSSCGSGGGGISPKGSGPSVASDEVSSFASALPDRKTASFSSLEPQDQEDLEPVKKKMRGDGDLDLNGQLLVAQPRRNAQTVHEDVRAAAGKPDKMEETLTCIICQDLLHDCVSLQPCMHTFCAACYSGWMERSSLCPTCRCPVERICKNHILNNLVEAYLIQHPDKSRSEEDVQSMDARNKITQDMLQPKVRRSFSDEEGSSEDLLELSDVDSESSDISQPYVVCRQCPEYRRQAAQPPHCPAPEGEPGAPQALGDAPSTSVSLTTAVQDYVCPLQGSHALCTCCFQPMPDRRAEREQDPRVAPQQCAVCLQPFCHLYWGCTRTGCYGCLAPFCELNLGDKCLDGVLNNNSYESDILKNYLATRGLTWKNMLTESLVALQRGVFLLSDYRVTGDTVLCYCCGLRSFRELTYQYRQNIPASELPVAVTSRPDCYWGRNCRTQVKAHHAMKFNHICEQTRFKN.

Residues 1–21 (MERPEEGKQSPPPQPWGRLLR) form a disordered region. The 52-residue stretch at 38–89 (WTIGRRRGCDLSFPSNKLVSGDHCRIVVDEKSGQVTLEDTSTSGTVINKLKV) folds into the FHA domain. The tract at residues 142–267 (FHGTKDTSGA…KKMRGDGDLD (126 aa)) is disordered. The segment covering 186–198 (PTASASSTEPSPA) has biased composition (low complexity). Ser-244 is modified (phosphoserine). Positions 254-264 (EPVKKKMRGDG) are enriched in basic and acidic residues. The RING-type zinc finger occupies 304–343 (CIICQDLLHDCVSLQPCMHTFCAACYSGWMERSSLCPTCR). Thr-386 is modified (phosphothreonine). Disordered regions lie at residues 388-417 (DMLQPKVRRSFSDEEGSSEDLLELSDVDSE) and 439-461 (AQPPHCPAPEGEPGAPQALGDAP). Residues 400 to 417 (DEEGSSEDLLELSDVDSE) are compositionally biased toward acidic residues. The PBZ-type zinc finger occupies 633-655 (PDCYWGRNCRTQVKAHHAMKFNH).

The protein belongs to the CHFR family. In terms of assembly, interacts with HDAC1 and HDAC2. Interacts with PML (with sumoylated form of PML). In terms of processing, poly-ADP-ribosylated. In addition to binding non covalently poly(ADP-ribose) via its PBZ-type zinc finger, the protein is also covalently poly-ADP-ribosylated by PARP1. Autoubiquitinated; may regulate its cellular level. Post-translationally, phosphorylated by PKB. Phosphorylation may affect its E3 ligase activity. As to expression, ubiquitous.

It is found in the nucleus. The protein localises to the PML body. The enzyme catalyses S-ubiquitinyl-[E2 ubiquitin-conjugating enzyme]-L-cysteine + [acceptor protein]-L-lysine = [E2 ubiquitin-conjugating enzyme]-L-cysteine + N(6)-ubiquitinyl-[acceptor protein]-L-lysine.. The protein operates within protein modification; protein ubiquitination. E3 ubiquitin-protein ligase that functions in the antephase checkpoint by actively delaying passage into mitosis in response to microtubule poisons. Acts in early prophase before chromosome condensation, when the centrosome move apart from each other along the periphery of the nucleus. Probably involved in signaling the presence of mitotic stress caused by microtubule poisons by mediating the 'Lys-48'-linked ubiquitination of target proteins, leading to their degradation by the proteasome. Promotes the ubiquitination and subsequent degradation of AURKA and PLK1. Probably acts as a tumor suppressor, possibly by mediating the polyubiquitination of HDAC1, leading to its degradation. May also promote the formation of 'Lys-63'-linked polyubiquitin chains and functions with the specific ubiquitin-conjugating UBC13-MMS2 (UBE2N-UBE2V2) heterodimer. Substrates that are polyubiquitinated at 'Lys-63' are usually not targeted for degradation, but are rather involved in signaling cellular stress. This is E3 ubiquitin-protein ligase CHFR (CHFR) from Homo sapiens (Human).